The following is a 92-amino-acid chain: Large ribosomal subunit protein bL28 (92 aa).

The interval 1-34 (MGRECEITGKKTMFGNNVPRKGLSRKKGGGGQHI) is disordered.

It belongs to the bacterial ribosomal protein bL28 family.

The sequence is that of Large ribosomal subunit protein bL28 from Borrelia turicatae (strain 91E135).